The chain runs to 304 residues: ATP phosphoribosyltransferase (304 aa).

Belongs to the ATP phosphoribosyltransferase family. Long subfamily. Requires Mg(2+) as cofactor.

The protein localises to the cytoplasm. The catalysed reaction is 1-(5-phospho-beta-D-ribosyl)-ATP + diphosphate = 5-phospho-alpha-D-ribose 1-diphosphate + ATP. It functions in the pathway amino-acid biosynthesis; L-histidine biosynthesis; L-histidine from 5-phospho-alpha-D-ribose 1-diphosphate: step 1/9. Feedback inhibited by histidine. In terms of biological role, catalyzes the condensation of ATP and 5-phosphoribose 1-diphosphate to form N'-(5'-phosphoribosyl)-ATP (PR-ATP). Has a crucial role in the pathway because the rate of histidine biosynthesis seems to be controlled primarily by regulation of HisG enzymatic activity. The chain is ATP phosphoribosyltransferase from Xanthomonas campestris pv. campestris (strain 8004).